The chain runs to 100 residues: uncharacterized protein (100 aa).

The next 2 membrane-spanning stretches (helical) occupy residues 17 to 37 and 78 to 98; these read IIILTLLFILIMLIFRNSVSF and MVDKTRLFIFLFFSFIITIPF.

It is found in the endoplasmic reticulum membrane. This is an uncharacterized protein from Saccharomyces cerevisiae (strain ATCC 204508 / S288c) (Baker's yeast).